A 149-amino-acid polypeptide reads, in one-letter code: Calmodulin (149 aa).

The residue at position 2 (A2) is an N-acetylalanine. EF-hand domains follow at residues 8–43 (EQIAEFKEAFSLFDKDGDGTITTKELGTVMRSLGQN), 44–79 (PTEAELQDMINEVDADGNGTIDFPEFLTMMARKMKD), 81–116 (DSEEEIREAFRVFDKDGNGFISAAELRHVMTNLGEK), and 117–149 (LTDEEVDEMIREADVDGDGQVNYEEFVNMMTNK). Residues D21, D23, D25, T27, E32, D57, D59, N61, T63, E68, D94, D96, N98, and E105 each coordinate Ca(2+). K116 is subject to N6,N6,N6-trimethyllysine. Ca(2+)-binding residues include D130, D132, D134, Q136, and E141.

Belongs to the calmodulin family.

Functionally, calmodulin mediates the control of a large number of enzymes, ion channels and other proteins by Ca(2+). Among the enzymes to be stimulated by the calmodulin-Ca(2+) complex are a number of protein kinases and phosphatases. The sequence is that of Calmodulin from Ciona intestinalis (Transparent sea squirt).